Consider the following 159-residue polypeptide: Heat shock protein beta-9 (159 aa).

Positions 36–147 (LLRDSPAAQE…EAQTGPSPRL (112 aa)) constitute a sHSP domain.

Belongs to the small heat shock protein (HSP20) family. In terms of tissue distribution, testis specific.

It localises to the cytoplasm. It is found in the nucleus. In Homo sapiens (Human), this protein is Heat shock protein beta-9 (HSPB9).